We begin with the raw amino-acid sequence, 270 residues long: MDWKKLQDLLSGVNQYSTAFGRIWLSVVFVFRVLVYVVAAERVWGDEQKDFDCNTRQPGCTNVCYDNFFPISNIRLWALQLIFVTCPSMLVILHVAYREERERKHRQKHGEQCAKLYSHPGKKHGGLWWTYLFSLIFKLIIELVFLYVLHTLWHGFTMPRLVQCASIVPCPNTVDCYIARPTEKKVFTYFMVGASAVCIILTICEICYLIFHRIMRGISKGKSTKSISSPKSSSRASTCRCHHKLLESGDPEADPASEKLQASAPSLTPI.

The Cytoplasmic segment spans residues 1 to 20; sequence MDWKKLQDLLSGVNQYSTAF. A helical membrane pass occupies residues 21–40; sequence GRIWLSVVFVFRVLVYVVAA. At 41–75 the chain is on the extracellular side; sequence ERVWGDEQKDFDCNTRQPGCTNVCYDNFFPISNIR. Residues 76 to 98 traverse the membrane as a helical segment; the sequence is LWALQLIFVTCPSMLVILHVAYR. At 99–126 the chain is on the cytoplasmic side; the sequence is EERERKHRQKHGEQCAKLYSHPGKKHGG. The chain crosses the membrane as a helical span at residues 127 to 149; that stretch reads LWWTYLFSLIFKLIIELVFLYVL. Over 150 to 188 the chain is Extracellular; that stretch reads HTLWHGFTMPRLVQCASIVPCPNTVDCYIARPTEKKVFT. Residues 189 to 211 traverse the membrane as a helical segment; that stretch reads YFMVGASAVCIILTICEICYLIF. The Cytoplasmic portion of the chain corresponds to 212–270; the sequence is HRIMRGISKGKSTKSISSPKSSSRASTCRCHHKLLESGDPEADPASEKLQASAPSLTPI. A disordered region spans residues 246 to 270; it reads LESGDPEADPASEKLQASAPSLTPI.

Belongs to the connexin family. Beta-type (group I) subfamily. As to quaternary structure, a connexon is composed of a hexamer of connexins. Interacts with CNST.

It localises to the cell membrane. The protein localises to the cell junction. Its subcellular location is the gap junction. Its function is as follows. One gap junction consists of a cluster of closely packed pairs of transmembrane channels, the connexons, through which materials of low MW diffuse from one cell to a neighboring cell. The polypeptide is Gap junction beta-3 protein (Gjb3) (Mus musculus (Mouse)).